The following is a 72-amino-acid chain: Crustacean hyperglycemic hormone A (72 aa).

Gln1 carries the post-translational modification Pyrrolidone carboxylic acid. Phe3 is modified (D-phenylalanine; in form CHHA-II). Cystine bridges form between Cys7–Cys43, Cys23–Cys39, and Cys26–Cys52. Valine amide is present on Val72.

In terms of processing, stereoinversion of L-Phe (in CHHA-I) to D-Phe (in CHHA-II).

Its subcellular location is the secreted. Functionally, hormone found in the sinus gland of isopods and decapods which controls the blood sugar level. Has a secretagogue action over the amylase released from the midgut gland. May act as a stress hormone and may be involved in the control of molting and reproduction. The polypeptide is Crustacean hyperglycemic hormone A (Cherax destructor (Common yabby crayfish)).